The primary structure comprises 371 residues: UDP-N-acetylglucosamine--N-acetylmuramyl-(pentapeptide) pyrophosphoryl-undecaprenol N-acetylglucosamine transferase (371 aa).

UDP-N-acetyl-alpha-D-glucosamine contacts are provided by residues 15–17 (TGG), Asn-126, Arg-172, Ser-199, Ile-256, 275–280 (ALTVSE), and Gln-301.

The protein belongs to the glycosyltransferase 28 family. MurG subfamily.

The protein resides in the cell inner membrane. It catalyses the reaction di-trans,octa-cis-undecaprenyl diphospho-N-acetyl-alpha-D-muramoyl-L-alanyl-D-glutamyl-meso-2,6-diaminopimeloyl-D-alanyl-D-alanine + UDP-N-acetyl-alpha-D-glucosamine = di-trans,octa-cis-undecaprenyl diphospho-[N-acetyl-alpha-D-glucosaminyl-(1-&gt;4)]-N-acetyl-alpha-D-muramoyl-L-alanyl-D-glutamyl-meso-2,6-diaminopimeloyl-D-alanyl-D-alanine + UDP + H(+). It functions in the pathway cell wall biogenesis; peptidoglycan biosynthesis. In terms of biological role, cell wall formation. Catalyzes the transfer of a GlcNAc subunit on undecaprenyl-pyrophosphoryl-MurNAc-pentapeptide (lipid intermediate I) to form undecaprenyl-pyrophosphoryl-MurNAc-(pentapeptide)GlcNAc (lipid intermediate II). The chain is UDP-N-acetylglucosamine--N-acetylmuramyl-(pentapeptide) pyrophosphoryl-undecaprenol N-acetylglucosamine transferase from Francisella tularensis subsp. tularensis (strain FSC 198).